Reading from the N-terminus, the 74-residue chain is Ferredoxin MycCII (74 aa).

One can recognise a 4Fe-4S ferredoxin-type domain in the interval 1–29; that stretch reads MRIVLDAERCVGAGQCEATAPELFTQGDD. Positions 10, 16, and 54 each coordinate [3Fe-4S] cluster.

The cofactor is [3Fe-4S] cluster.

Its pathway is antibiotic biosynthesis; mycinamicin biosynthesis. Its function is as follows. Specific electron transport protein capable of effectively supporting cytochrome P450 MycCI activity in the biosynthesis of mycinamicin, a 16-membered macrolide antibiotic. The chain is Ferredoxin MycCII from Micromonospora griseorubida.